Here is a 417-residue protein sequence, read N- to C-terminus: NADH-quinone oxidoreductase subunit D (417 aa).

This sequence belongs to the complex I 49 kDa subunit family. In terms of assembly, NDH-1 is composed of 14 different subunits. Subunits NuoB, C, D, E, F, and G constitute the peripheral sector of the complex.

It is found in the cell inner membrane. The catalysed reaction is a quinone + NADH + 5 H(+)(in) = a quinol + NAD(+) + 4 H(+)(out). In terms of biological role, NDH-1 shuttles electrons from NADH, via FMN and iron-sulfur (Fe-S) centers, to quinones in the respiratory chain. The immediate electron acceptor for the enzyme in this species is believed to be ubiquinone. Couples the redox reaction to proton translocation (for every two electrons transferred, four hydrogen ions are translocated across the cytoplasmic membrane), and thus conserves the redox energy in a proton gradient. In Ralstonia pickettii (strain 12J), this protein is NADH-quinone oxidoreductase subunit D.